The following is a 1088-amino-acid chain: ATP-dependent helicase/deoxyribonuclease subunit B (1088 aa).

The protein belongs to the helicase family. AddB/RexB type 2 subfamily. In terms of assembly, heterodimer of AddA and RexB. The cofactor is Mg(2+).

Functionally, the heterodimer acts as both an ATP-dependent DNA helicase and an ATP-dependent, dual-direction single-stranded exonuclease. Recognizes the chi site generating a DNA molecule suitable for the initiation of homologous recombination. This subunit has 5' -&gt; 3' nuclease activity but not helicase activity. This Streptococcus suis (strain 98HAH33) protein is ATP-dependent helicase/deoxyribonuclease subunit B.